We begin with the raw amino-acid sequence, 434 residues long: Protein POLLENLESS 3 (434 aa).

The segment at 13–47 (VYYTPPPARTSDHVAAMPMTERRRPPYSCSSSSER) is disordered. The Nuclear localization signal 1 motif lies at 34–37 (RRRP). 4 TPR repeats span residues 95–131 (DSAL…ESQD), 133–164 (IDNL…LEQG), 191–224 (ARIL…ERDK), and 241–274 (PEAK…AVEM). Residues 142–166 (KKSGRIEEEAVLLEHKLQTLEQGMG) are a coiled coil. The tract at residues 309 to 329 (TANKNYSDVSSSPASVRPNSA) is disordered. Residues 310-326 (ANKNYSDVSSSPASVRP) show a composition bias toward polar residues. The Nuclear localization signal 2 signature appears at 377 to 380 (KRKK). A compositionally biased stretch (basic and acidic residues) spans 393–408 (VKDTADGPKSESKKSW). A disordered region spans residues 393-434 (VKDTADGPKSESKKSWADIAEEEEAEEEEEERLQGELKTAEM). Residues 408–434 (WADIAEEEEAEEEEEERLQGELKTAEM) are a coiled coil. Over residues 411 to 423 (IAEEEEAEEEEEE) the composition is skewed to acidic residues. Over residues 424 to 434 (RLQGELKTAEM) the composition is skewed to basic and acidic residues.

Belongs to the MS5 protein family. As to expression, expressed at low levels mostly in floral organs during meiosis. Also barely detectable in leaves, stems and roots.

The protein localises to the nucleus. In terms of biological role, essential for male fertility, especially for microspore and pollen grain production. Involved in the regulation of cell division after male meiosis I and II to facilitate exit from meiosis and transition to G1. The chain is Protein POLLENLESS 3 from Arabidopsis thaliana (Mouse-ear cress).